The primary structure comprises 4062 residues: Transcription-associated protein 1 (4062 aa).

The disordered stretch occupies residues 531 to 562 (LASEPSTSEDADESGGDPNKLPPPTKEGKKTS). 2 TPR repeats span residues 1346-1379 (LDGV…LLDI) and 1677-1714 (RRSF…DDEE). Residues 2659 to 2670 (VETEMKREEPEP) show a composition bias toward basic and acidic residues. A disordered region spans residues 2659-2692 (VETEMKREEPEPMEVDEKDSQDDSKDAGEPKEKE). Residues 2671-2680 (MEVDEKDSQD) show a composition bias toward acidic residues. Residues 2681–2692 (DSKDAGEPKEKE) show a composition bias toward basic and acidic residues. An FAT domain is found at 2800–3411 (LIEFISSKHE…FYHIREAVSV (612 aa)). The stretch at 2847 to 2880 (IETLESLGTLYNEISEFDQFAAIWERRAVFPDTM) is one TPR 3 repeat. The PI3K/PI4K catalytic domain occupies 3682–4046 (EPNFEIVIKG…DCVSLISRAK (365 aa)). Residues 3688-3694 (VIKGGQV) form a G-loop region. The catalytic loop stretch occupies residues 3902–3910 (NLTPMGPDQ). The tract at residues 3922–3950 (NPSYRFEIRGGRSLHDIQHFGHEVPFRLT) is activation loop. One can recognise an FATC domain in the interval 4031–4062 (AKLRKDDCVSLISRAKDSDNLARMPPTYHAWF).

This sequence belongs to the PI3/PI4-kinase family. TRA1 subfamily. As to quaternary structure, interacts with histone acetyltransferase Tip60 homolog mys-1. Probably a component of a complex with histone acetyltransferase (HAT) activity, at least composed of mys-1 and trr-1. Expressed in germ cells and somatic cells.

It localises to the nucleus. The protein resides in the chromosome. In terms of biological role, influences germ cell fate in hermaphrodites. Acts downstream of tra-2 and tra-3 and through the Tip60 histone acetyltransferase complex to regulate germ cell fate decisions. Required for spermatogenesis and embryonic development. Acts with tra-2 to promote expression of fog-3 and control male tail development. Involved in the negative regulation of vulval development. Involved in the positive regulation of transcription factor daf-16, probably acting by histone acetylation; thereby modulating stress resistance. Plays a role in acetylation of nucleosomal histone H4, probably acting as a component of the Tip60 histone acetyltransferase complex. The chain is Transcription-associated protein 1 from Caenorhabditis elegans.